The chain runs to 230 residues: MKLSFHGQSTIYFEANGKKVIVDPFITGNELSDLNAEDVEVDYIVLTHGHGDHFGDTVEIAKKNNATVVGLAEVADYLSTSQGVENVHPMNIGGKWEFEFGSVKYVQAFHSSSLTNEDGIPVYLGASTGLILEVDGKTIYHCGDTGLFSDMKLIADRHPVDICFVPIGDNFTMGIEDASYAINEFIQPKISVPIHYDTFPYIEQNPEDFKKLVNKGEVQILKPGEEVKFD.

Belongs to the UPF0173 family.

The chain is UPF0173 metal-dependent hydrolase Sca_1312 from Staphylococcus carnosus (strain TM300).